A 482-amino-acid chain; its full sequence is uncharacterized protein (482 aa).

The HTH gntR-type domain maps to 12-80; sequence LPKYRQIVHF…MGKGTVVINN (69 aa). A DNA-binding region (H-T-H motif) is located at residues 40–59; sequence QRTLAKDFQVNRSTVITALE. At lysine 325 the chain carries N6-(pyridoxal phosphate)lysine.

It in the C-terminal section; belongs to the class-I pyridoxal-phosphate-dependent aminotransferase family. Pyridoxal 5'-phosphate is required as a cofactor.

This is an uncharacterized protein from Bacillus subtilis (strain 168).